A 373-amino-acid polypeptide reads, in one-letter code: Indole glucosinolate O-methyltransferase 3 (373 aa).

S-adenosyl-L-homocysteine is bound by residues G217, D240, D260, M261, and K274. H278 (proton acceptor) is an active-site residue.

Belongs to the class I-like SAM-binding methyltransferase superfamily. Cation-independent O-methyltransferase family.

Its pathway is secondary metabolite biosynthesis. Involved in indole glucosinolate biosynthesis. Catalyzes methoxylation reactions of the glucosinolate indole ring. Converts the hydroxy intermediates 4-hydroxy-indol-3-yl-methylglucosinolate (4OH-I3M) and 1-hydroxy-indol-3-yl-methylglucosinolate (1OH-I3M) to 4-methoxy-indol-3-yl-methylglucosinolate (4MO-I3M) and 1-methoxy-indol-3-yl-methylglucosinolate(1MO-I3M), respectively. This chain is Indole glucosinolate O-methyltransferase 3, found in Arabidopsis thaliana (Mouse-ear cress).